The following is a 69-amino-acid chain: Toxin CSTX-11 (69 aa).

Intrachain disulfides connect C6–C21, C13–C30, C20–C47, and C32–C45.

Expressed by the venom gland.

The protein resides in the secreted. It localises to the target cell membrane. Functionally, spider venom toxin that shows calcium channel blocking activity and exhibits cytolytic activity by affecting the outer leaflet curvature and/or pore formation across the membrane. It blocks L-type calcium channels (Cav1/CACNA1) in mammalian neurons at nanomolar concentrations. Furthermore, it produces a slow voltage-independent block of mid/low and high voltage-activated calcium channels in cockroach neurons. Potassium ions, histamine, M-ctenitoxin-Cs1a (AC P83619), CSTX-9 (AC P58604), and CSTX-13 (AC P83919) synergistically increase the insecticidal activity of this toxin. In vivo, it causes paralysis in blow flies and provokes death in drosophila. The chain is Toxin CSTX-11 from Cupiennius salei (American wandering spider).